We begin with the raw amino-acid sequence, 450 residues long: NADH-quinone oxidoreductase subunit H (450 aa).

9 consecutive transmembrane segments (helical) span residues 18 to 38, 91 to 111, 128 to 148, 169 to 189, 201 to 221, 262 to 282, 292 to 312, 324 to 344, and 358 to 378; these read WWLVLGKALAIFVFLVLTPLL, ILAPVIAAVPAFMAFAVIPFG, LPVAVLYVLAATSIGVYGIVL, VISYEIAMALSFAAVFLDAGT, HTWYVFLLLPSFLIYVTSMVG, VTVSALATTLFLGGWHAPFPL, WWPVLWFTLKVWGFLFVFVWL, FMGLGWKILIPISLVWVMIVA, and SIALVVAGLVVALVVVVLLWK. The interval 387 to 450 is disordered; the sequence is APEKPVEPRG…TGPTQENSDD (64 aa). The segment covering 390 to 400 has biased composition (basic and acidic residues); sequence KPVEPRGRAEL. Residues 433–450 are compositionally biased toward polar residues; that stretch reads VSVTGAHSTGPTQENSDD.

The protein belongs to the complex I subunit 1 family. NDH-1 is composed of 14 different subunits. Subunits NuoA, H, J, K, L, M, N constitute the membrane sector of the complex.

Its subcellular location is the cell membrane. It carries out the reaction a quinone + NADH + 5 H(+)(in) = a quinol + NAD(+) + 4 H(+)(out). NDH-1 shuttles electrons from NADH, via FMN and iron-sulfur (Fe-S) centers, to quinones in the respiratory chain. The immediate electron acceptor for the enzyme in this species is believed to be ubiquinone. Couples the redox reaction to proton translocation (for every two electrons transferred, four hydrogen ions are translocated across the cytoplasmic membrane), and thus conserves the redox energy in a proton gradient. This subunit may bind ubiquinone. In Rhodococcus jostii (strain RHA1), this protein is NADH-quinone oxidoreductase subunit H.